Reading from the N-terminus, the 184-residue chain is Crossover junction endodeoxyribonuclease RuvC (184 aa).

Catalysis depends on residues Asp11, Glu73, and Asp147. Asp11, Glu73, and Asp147 together coordinate Mg(2+).

Belongs to the RuvC family. Homodimer which binds Holliday junction (HJ) DNA. The HJ becomes 2-fold symmetrical on binding to RuvC with unstacked arms; it has a different conformation from HJ DNA in complex with RuvA. In the full resolvosome a probable DNA-RuvA(4)-RuvB(12)-RuvC(2) complex forms which resolves the HJ. Requires Mg(2+) as cofactor.

The protein resides in the cytoplasm. It carries out the reaction Endonucleolytic cleavage at a junction such as a reciprocal single-stranded crossover between two homologous DNA duplexes (Holliday junction).. The RuvA-RuvB-RuvC complex processes Holliday junction (HJ) DNA during genetic recombination and DNA repair. Endonuclease that resolves HJ intermediates. Cleaves cruciform DNA by making single-stranded nicks across the HJ at symmetrical positions within the homologous arms, yielding a 5'-phosphate and a 3'-hydroxyl group; requires a central core of homology in the junction. The consensus cleavage sequence is 5'-(A/T)TT(C/G)-3'. Cleavage occurs on the 3'-side of the TT dinucleotide at the point of strand exchange. HJ branch migration catalyzed by RuvA-RuvB allows RuvC to scan DNA until it finds its consensus sequence, where it cleaves and resolves the cruciform DNA. The sequence is that of Crossover junction endodeoxyribonuclease RuvC from Neisseria gonorrhoeae (strain ATCC 700825 / FA 1090).